A 237-amino-acid chain; its full sequence is MSRLAVVFGGSRGIGRAASKLLAQRGHRIVLLSRNKEAAQSTAQSLPGENHLGLSCDVSKEEEVQKAFETINKTCGTVGFLVNAAGINRDALLLRSKSEDMLSVLHTNLLGSMLTCKAAVRNMLSHGGAIVNIGSVVGVKGNAGQCVYSASKAGLEGFTRSLAKEVASRNIRVNLVAPGLIHTDMTAGLAEEAAVRTIPLGRFGEPAEVAQAMLFLLESPYITGQILLVDGGLQLLM.

NADP(+) contacts are provided by residues 11–14, 34–35, Asp57, and 84–86; these read SRGI, RN, and AAG. Ser135 is a binding site for substrate. Residues Tyr148, Lys152, and 181 to 183 each bind NADP(+); that span reads IHT. Tyr148 functions as the Proton acceptor in the catalytic mechanism.

The protein belongs to the short-chain dehydrogenases/reductases (SDR) family. As to quaternary structure, homotetramer (in vitro). Heterotetramer with HSD17B8; contains two molecules each of HSD17B8 and CBR4.

The protein localises to the mitochondrion matrix. The protein operates within lipid metabolism; fatty acid biosynthesis. In terms of biological role, the heterotetramer with HSD17B8 has NADH-dependent 3-ketoacyl-acyl carrier protein reductase activity, and thereby plays a role in mitochondrial fatty acid biosynthesis. Within the heterotetramer, HSD17B8 binds NADH; CBR4 binds NADPD. The homotetramer has NADPH-dependent quinone reductase activity. Both homotetramer and the heterotetramer have broad in vitro substrate specificity and can reduce 9,10-phenanthrenequinone, 1,4-benzoquinone and various other o-quinones and p-quinones. The polypeptide is Carbonyl reductase family member 4 (cbr4) (Danio rerio (Zebrafish)).